A 550-amino-acid chain; its full sequence is Nucleoside hydrolase 4 (550 aa).

Belongs to the IUNH family.

The protein resides in the cytoplasm. Functionally, may be involved in the degradation of nucleosides. This is Nucleoside hydrolase 4 from Arabidopsis thaliana (Mouse-ear cress).